The chain runs to 410 residues: Probable peptidoglycan glycosyltransferase FtsW (410 aa).

Over 1–37 (MRSEERQLNLFGTSVNWSWPNLFKEREAPGMQLYDRA) the chain is Cytoplasmic. Residues 38–58 (LLFAVLSLICFGFVMVMSASM) form a helical membrane-spanning segment. At 59–69 (PEAQSLTGNPY) the chain is on the periplasmic side. A helical transmembrane segment spans residues 70–90 (HFAIRHFAYLVGCAVIAAVVL). Residues 91–99 (RIEMSRWQQ) are Cytoplasmic-facing. The helical transmembrane segment at 100-120 (FSPLLLLIVGIMLVAVLLVGT) threads the bilayer. At 121-131 (SVNGATRWLSV) the chain is on the periplasmic side. Residues 132–154 (GPIRIQVAELAKFAFTIYMAGYL) traverse the membrane as a helical segment. Topologically, residues 155-163 (VRRHQEIRE) are cytoplasmic. The helical transmembrane segment at 164–184 (NAKGFYKPIAVFAVYAFLILM) threads the bilayer. Over 185–186 (QP) the chain is Periplasmic. A helical membrane pass occupies residues 187–207 (DLGTVVVLFVGTVGLLFLAGA). Position 208 (arginine 208) is a topological domain, cytoplasmic. A helical membrane pass occupies residues 209–229 (LLDFFALILTGVMAFVALVLL). Residues 230 to 291 (EPYRMRRVTS…PEAHTDFIFA (62 aa)) are Periplasmic-facing. Residues 292–312 (VIGEELGFIGIVVVLSVLLFV) form a helical membrane-spanning segment. The Cytoplasmic segment spans residues 313-336 (ALRAIKLGNLCIEIDKPFEGYLAY). The chain crosses the membrane as a helical span at residues 337–357 (AIGIWFCFQTVVNVGASIGML). The Periplasmic portion of the chain corresponds to 358–364 (PTKGLTL). The helical transmembrane segment at 365–385 (PFISYGGSSLWVMTAAAMILI) threads the bilayer. Residues 386-410 (RIDHERRLSSIQAVQGKKVNDNREY) lie on the Cytoplasmic side of the membrane.

This sequence belongs to the SEDS family. FtsW subfamily.

The protein resides in the cell inner membrane. The catalysed reaction is [GlcNAc-(1-&gt;4)-Mur2Ac(oyl-L-Ala-gamma-D-Glu-L-Lys-D-Ala-D-Ala)](n)-di-trans,octa-cis-undecaprenyl diphosphate + beta-D-GlcNAc-(1-&gt;4)-Mur2Ac(oyl-L-Ala-gamma-D-Glu-L-Lys-D-Ala-D-Ala)-di-trans,octa-cis-undecaprenyl diphosphate = [GlcNAc-(1-&gt;4)-Mur2Ac(oyl-L-Ala-gamma-D-Glu-L-Lys-D-Ala-D-Ala)](n+1)-di-trans,octa-cis-undecaprenyl diphosphate + di-trans,octa-cis-undecaprenyl diphosphate + H(+). It functions in the pathway cell wall biogenesis; peptidoglycan biosynthesis. Its function is as follows. Peptidoglycan polymerase that is essential for cell division. The polypeptide is Probable peptidoglycan glycosyltransferase FtsW (Shewanella sediminis (strain HAW-EB3)).